A 1653-amino-acid polypeptide reads, in one-letter code: Protein strawberry notch (1653 aa).

5 disordered regions span residues 1–46 (MTSK…GRDL), 190–211 (GSPAARSSGNAGTTGSSQGGAI), 237–265 (GSNAPPPPPPSTAANSVRHSPTGGIPNPG), 317–345 (NNQKPPPIATTPGSGGPAGGAPGSGVKGN), and 883–1043 (SVAD…PSGS). The span at 11 to 36 (DADDDNDNFDEDDSGSDFDDDEDPDQ) shows a compositional bias: acidic residues. A phosphoserine mark is found at Ser24 and Ser26. Residues 194-205 (ARSSGNAGTTGS) are compositionally biased toward polar residues. The span at 256–265 (SPTGGIPNPG) shows a compositional bias: low complexity. Positions 329 to 342 (GSGGPAGGAPGSGV) are enriched in gly residues. Low complexity predominate over residues 883–901 (SVADSTSSLSNNSNITTAA). Phosphoserine is present on residues Ser929 and Ser931. Residues 966–975 (IDDEDEDHDV) show a composition bias toward acidic residues. Residues 980-998 (RSVASDASSDFNPFFSGSD) are compositionally biased toward polar residues. Positions 1008–1027 (RSKKSKKAQKKSKKKVKKEK) are enriched in basic residues. A coiled-coil region spans residues 1064–1125 (LSTQDKIQDL…RKIERLGARL (62 aa)).

It belongs to the SBNO family. Interacts with vg for function in the wing disk. Interacts with Su(H) for function in the eye disk. As to expression, at stage 8, when the formation of the midline precursor cells depends on Notch signaling, high level of expression is seen in the midline precursor cells and a lower level in the surrounding epidermal cells. Between stages 11 and 14, expression is uniform throughout the epidermis, and at stage 16, high level of expression is restricted to the central nervous system. Expressed in the larval leg, wing and eye imaginal disks. Expression is over the wing disk and accumulates within the pleural region.

The protein localises to the nucleus. Functionally, notch pathway component, may contribute to the specificity between lateral and inductive Notch signaling pathways in the wing disk. Required during many developmental stages including oogenesis, embryogenesis and imaginal development of the eye, wing and leg. Ebi and sno regulate EGFR-dependent Delta transcription in the developing eye, by antagonizing a repressor function of Suppressor of Hairless (Su(H)). They are required in the R-cells for normal cone cell development. This chain is Protein strawberry notch, found in Drosophila melanogaster (Fruit fly).